The chain runs to 151 residues: Acidic phospholipase A2 6 (151 aa).

Residues 1-27 (MYPAHLLVLLAVCVSLLGAASIPARPL) form the signal peptide. Disulfide bonds link Cys-38–Cys-104, Cys-54–Cys-151, Cys-56–Cys-72, Cys-71–Cys-132, Cys-78–Cys-125, Cys-88–Cys-118, and Cys-111–Cys-123. Ca(2+) is bound by residues Tyr-55, Gly-57, and Gly-59. Residue His-75 is part of the active site. Asp-76 is a Ca(2+) binding site. Residue Asp-126 is part of the active site.

The protein belongs to the phospholipase A2 family. Group I subfamily. D49 sub-subfamily. Requires Ca(2+) as cofactor. In terms of tissue distribution, expressed by the venom gland.

The protein localises to the secreted. The catalysed reaction is a 1,2-diacyl-sn-glycero-3-phosphocholine + H2O = a 1-acyl-sn-glycero-3-phosphocholine + a fatty acid + H(+). Its function is as follows. PLA2 catalyzes the calcium-dependent hydrolysis of the 2-acyl groups in 3-sn-phosphoglycerides. The sequence is that of Acidic phospholipase A2 6 from Tropidechis carinatus (Australian rough-scaled snake).